A 346-amino-acid polypeptide reads, in one-letter code: Uroporphyrinogen decarboxylase (346 aa).

Residues 26–30, aspartate 76, tyrosine 153, serine 208, and histidine 323 contribute to the substrate site; that span reads RQAGR.

This sequence belongs to the uroporphyrinogen decarboxylase family. As to quaternary structure, homodimer.

The protein resides in the cytoplasm. It carries out the reaction uroporphyrinogen III + 4 H(+) = coproporphyrinogen III + 4 CO2. Its pathway is porphyrin-containing compound metabolism; protoporphyrin-IX biosynthesis; coproporphyrinogen-III from 5-aminolevulinate: step 4/4. Its function is as follows. Catalyzes the decarboxylation of four acetate groups of uroporphyrinogen-III to yield coproporphyrinogen-III. The sequence is that of Uroporphyrinogen decarboxylase from Prochlorococcus marinus (strain MIT 9301).